A 190-amino-acid polypeptide reads, in one-letter code: Threonylcarbamoyl-AMP synthase (190 aa).

Residues 7–190 (ADAISFIVDV…ALTGELFRQG (184 aa)) enclose the YrdC-like domain.

This sequence belongs to the SUA5 family. TsaC subfamily.

The protein resides in the cytoplasm. It catalyses the reaction L-threonine + hydrogencarbonate + ATP = L-threonylcarbamoyladenylate + diphosphate + H2O. Its function is as follows. Required for the formation of a threonylcarbamoyl group on adenosine at position 37 (t(6)A37) in tRNAs that read codons beginning with adenine. Catalyzes the conversion of L-threonine, HCO(3)(-)/CO(2) and ATP to give threonylcarbamoyl-AMP (TC-AMP) as the acyladenylate intermediate, with the release of diphosphate. The polypeptide is Threonylcarbamoyl-AMP synthase (Cronobacter sakazakii (strain ATCC BAA-894) (Enterobacter sakazakii)).